The following is a 983-amino-acid chain: ABC transporter A family member 2 (983 aa).

The next 6 membrane-spanning stretches (helical) occupy residues 33 to 53, 221 to 241, 279 to 299, 305 to 325, 339 to 359, and 416 to 436; these read FLQL…QAAM, IVAL…FGFV, ILTA…QFDF, FPVV…LAFM, VGFF…SGFP, and VLTI…WFVL. Positions 518 to 763 constitute an ABC transporter domain; sequence VQIRGLAKTY…FGTGFIANIS (246 aa). 564–571 contributes to the ATP binding site; sequence GPNGAGKT. The tract at residues 963–983 is disordered; sequence RSGSTSSRRFSRSGSSRRFSS.

Belongs to the ABC transporter superfamily. ABCA family. CPR flippase (TC 3.A.1.211) subfamily.

Its subcellular location is the membrane. The chain is ABC transporter A family member 2 (ABCA2) from Arabidopsis thaliana (Mouse-ear cress).